A 476-amino-acid polypeptide reads, in one-letter code: ATP synthase subunit beta (476 aa).

154–161 (GGAGVGKT) is a binding site for ATP.

The protein belongs to the ATPase alpha/beta chains family. In terms of assembly, F-type ATPases have 2 components, CF(1) - the catalytic core - and CF(0) - the membrane proton channel. CF(1) has five subunits: alpha(3), beta(3), gamma(1), delta(1), epsilon(1). CF(0) has four main subunits: a(1), b(1), b'(1) and c(9-12).

Its subcellular location is the cell inner membrane. It catalyses the reaction ATP + H2O + 4 H(+)(in) = ADP + phosphate + 5 H(+)(out). Functionally, produces ATP from ADP in the presence of a proton gradient across the membrane. The catalytic sites are hosted primarily by the beta subunits. This Rhodopseudomonas palustris (strain ATCC BAA-98 / CGA009) protein is ATP synthase subunit beta.